The following is a 222-amino-acid chain: Superoxide dismutase [Cu-Zn], chloroplastic (222 aa).

A chloroplast-targeting transit peptide spans M1–A68. Cu cation contacts are provided by H114, H116, and H131. Cysteines 125 and 214 form a disulfide. The Zn(2+) site is built by H131, H139, H148, and D151. A Cu cation-binding site is contributed by H188.

The protein belongs to the Cu-Zn superoxide dismutase family. In terms of assembly, homotetramer. It depends on Cu cation as a cofactor. The cofactor is Zn(2+).

It is found in the plastid. It localises to the chloroplast. It catalyses the reaction 2 superoxide + 2 H(+) = H2O2 + O2. Its function is as follows. Destroys radicals which are normally produced within the cells and which are toxic to biological systems. In Spinacia oleracea (Spinach), this protein is Superoxide dismutase [Cu-Zn], chloroplastic (SODCP).